The following is a 124-amino-acid chain: Modulator protein MzrA (124 aa).

Over 1-7 (MINRRMK) the chain is Cytoplasmic. Residues 8 to 28 (TGFVFHLLLLLLPLVVLVTSS) form a helical membrane-spanning segment. Topologically, residues 29 to 124 (RRTADDVTLH…KLSQQPFKLG (96 aa)) are periplasmic.

The protein belongs to the MzrA family. In terms of assembly, interacts with EnvZ.

It localises to the cell inner membrane. Modulates the activity of the EnvZ/OmpR two-component regulatory system, probably by directly modulating EnvZ enzymatic activity and increasing stability of phosphorylated OmpR. This Musicola paradisiaca (strain Ech703) (Dickeya paradisiaca) protein is Modulator protein MzrA.